A 244-amino-acid chain; its full sequence is 3-deoxy-manno-octulosonate cytidylyltransferase (244 aa).

This sequence belongs to the KdsB family.

It is found in the cytoplasm. The enzyme catalyses 3-deoxy-alpha-D-manno-oct-2-ulosonate + CTP = CMP-3-deoxy-beta-D-manno-octulosonate + diphosphate. The protein operates within nucleotide-sugar biosynthesis; CMP-3-deoxy-D-manno-octulosonate biosynthesis; CMP-3-deoxy-D-manno-octulosonate from 3-deoxy-D-manno-octulosonate and CTP: step 1/1. It functions in the pathway bacterial outer membrane biogenesis; lipopolysaccharide biosynthesis. In terms of biological role, activates KDO (a required 8-carbon sugar) for incorporation into bacterial lipopolysaccharide in Gram-negative bacteria. This chain is 3-deoxy-manno-octulosonate cytidylyltransferase, found in Vesicomyosocius okutanii subsp. Calyptogena okutanii (strain HA).